A 269-amino-acid chain; its full sequence is GATA zinc finger domain-containing protein 1 (269 aa).

The GATA-type zinc-finger motif lies at 9–33 (CSVCKTTSSSMWKKGAQGEILCHHC). The interval 63–115 (ATFASTSATPPQSNGGGGGKQSKQEIHRRSARLRNTKYKSAPAAEKKVSTKGK) is disordered. A Glycyl lysine isopeptide (Lys-Gly) (interchain with G-Cter in SUMO2) cross-link involves residue K262.

As to quaternary structure, component of a chromatin complex, at least composed of KDM5A, GATAD1 and EMSY. In terms of tissue distribution, ubiquitously expressed among various tissue types. Expressed in left ventricular myocytes.

The protein localises to the nucleus. Its function is as follows. Component of some chromatin complex recruited to chromatin sites methylated 'Lys-4' of histone H3 (H3K4me), with a preference for trimethylated form (H3K4me3). The protein is GATA zinc finger domain-containing protein 1 (GATAD1) of Homo sapiens (Human).